A 325-amino-acid chain; its full sequence is Fructose-1,6-bisphosphatase class 1 (325 aa).

4 residues coordinate Mg(2+): Glu-84, Asp-103, Leu-105, and Asp-106. Residues 106-109 (DGSS), Asn-196, and Lys-262 contribute to the substrate site. Glu-268 is a Mg(2+) binding site.

It belongs to the FBPase class 1 family. Homotetramer. Mg(2+) serves as cofactor.

The protein resides in the cytoplasm. It carries out the reaction beta-D-fructose 1,6-bisphosphate + H2O = beta-D-fructose 6-phosphate + phosphate. Its pathway is carbohydrate biosynthesis; gluconeogenesis. The sequence is that of Fructose-1,6-bisphosphatase class 1 from Shewanella oneidensis (strain ATCC 700550 / JCM 31522 / CIP 106686 / LMG 19005 / NCIMB 14063 / MR-1).